The following is a 685-amino-acid chain: Putative mannosyltransferase YycA (685 aa).

The next 6 helical transmembrane spans lie at 6 to 26, 68 to 88, 109 to 129, 154 to 174, 176 to 196, and 204 to 224; these read FDAA…YHIW, VLWI…SVII, FGVG…IAVA, AVKQ…GLAF, MKMM…LIAS, and IGSL…WAIA. Residues 269–347 are disordered; the sequence is MNAAGGGNMQ…GGGGGKSVNM (79 aa). Polar residues predominate over residues 277–286; it reads MQNQDNMQAP. The segment covering 287–303 has biased composition (low complexity); the sequence is NGNGSSFSQNGNQSFGN. The segment covering 318–343 has biased composition (gly residues); that stretch reads LNGGGGTPPTGGNGPGNGGPGGGGGK. Helical transmembrane passes span 363–383, 399–419, 422–442, 455–475, 479–499, 513–533, and 573–593; these read LSGQ…GAII, TLFW…AGFF, YYLI…WYTM, YLLP…LSAY, IGSV…LALL, IISL…PLLY, and TGEE…YIIY. Residues 652 to 685 form a disordered region; it reads TSDEYSGSSSSTNSVQGMRRGPGGESQQTLYLVE. Positions 654–665 are enriched in low complexity; the sequence is DEYSGSSSSTNS. The segment covering 676 to 685 has biased composition (polar residues); it reads ESQQTLYLVE.

The protein belongs to the glycosyltransferase 39 family.

Its subcellular location is the cell membrane. This is Putative mannosyltransferase YycA (yycA) from Bacillus subtilis (strain 168).